The chain runs to 261 residues: Probable membrane transporter protein ORF9 (261 aa).

8 helical membrane passes run 8 to 28, 29 to 49, 78 to 98, 100 to 120, 133 to 151, 152 to 171, 189 to 209, and 231 to 251; these read LLAF…IAGG, GGMI…QTLG, LPMA…ATIV, GDVL…YFGL, VTPF…FYDG, VFGP…LAGF, VGAF…GLLM, and IIKP…LADP.

Belongs to the 4-toluene sulfonate uptake permease (TSUP) (TC 2.A.102) family.

It localises to the cell membrane. The polypeptide is Probable membrane transporter protein ORF9 (Sinorhizobium sp).